The sequence spans 188 residues: Adenine phosphoribosyltransferase (188 aa).

The protein belongs to the purine/pyrimidine phosphoribosyltransferase family. Homodimer.

It localises to the cytoplasm. It carries out the reaction AMP + diphosphate = 5-phospho-alpha-D-ribose 1-diphosphate + adenine. It participates in purine metabolism; AMP biosynthesis via salvage pathway; AMP from adenine: step 1/1. Functionally, catalyzes a salvage reaction resulting in the formation of AMP, that is energically less costly than de novo synthesis. This Paraburkholderia xenovorans (strain LB400) protein is Adenine phosphoribosyltransferase.